The primary structure comprises 361 residues: Ornithine carbamoyltransferase, mitochondrial (361 aa).

Residues 1-24 constitute a mitochondrion transit peptide; sequence MIPTARCGALRQKIPVQAVRQYSS. Carbamoyl phosphate is bound by residues 89–92, arginine 140, histidine 167, and glutamine 170; that span reads STRT. The L-ornithine site is built by asparagine 207, aspartate 273, serine 277, and methionine 278. The active-site Proton acceptor is the cysteine 315. Carbamoyl phosphate is bound by residues 315 to 316 and arginine 342; that span reads CL.

The protein belongs to the aspartate/ornithine carbamoyltransferase superfamily. OTCase family. In terms of assembly, homotrimer.

Its subcellular location is the mitochondrion matrix. It carries out the reaction carbamoyl phosphate + L-ornithine = L-citrulline + phosphate + H(+). It functions in the pathway amino-acid biosynthesis; L-arginine biosynthesis; L-arginine from L-ornithine and carbamoyl phosphate: step 1/3. The chain is Ornithine carbamoyltransferase, mitochondrial (arg1) from Aspergillus terreus.